The sequence spans 193 residues: Ion-translocating oxidoreductase complex subunit B (193 aa).

Residues 1–23 (MTFLFIVITLLALIFGAILGFAS) are hydrophobic. Residues 29 to 87 (EADPVVEKIDAILPQSQCGQCGYPGCKPYAEAICNGDEITKCIPGGQTTIVKIAEILGV) form the 4Fe-4S domain. The [4Fe-4S] cluster site is built by Cys-46, Cys-49, Cys-54, Cys-70, Cys-110, Cys-113, Cys-116, Cys-120, Cys-140, Cys-143, Cys-146, and Cys-150. 2 consecutive 4Fe-4S ferredoxin-type domains span residues 101–130 (KVAF…GTNK) and 131–160 (AMHT…MIPV).

This sequence belongs to the 4Fe4S bacterial-type ferredoxin family. RnfB subfamily. The complex is composed of six subunits: RnfA, RnfB, RnfC, RnfD, RnfE and RnfG. Requires [4Fe-4S] cluster as cofactor.

The protein localises to the cell inner membrane. In terms of biological role, part of a membrane-bound complex that couples electron transfer with translocation of ions across the membrane. This Haemophilus influenzae (strain 86-028NP) protein is Ion-translocating oxidoreductase complex subunit B.